The sequence spans 467 residues: Phytase A (467 aa).

Residues M1 to P23 form the signal peptide. N-linked (GlcNAc...) asparagine glycosylation occurs at N27. A disulfide bridge connects residues C31 and C40. 1D-myo-inositol hexakisphosphate contacts are provided by Q50 and Y51. The N-linked (GlcNAc...) asparagine glycan is linked to N59. 4 disulfides stabilise this stretch: C71–C414, C215–C465, C264–C282, and C436–C444. Residues R81, H82, R85, and T88 each contribute to the 1D-myo-inositol hexakisphosphate site. H82 acts as the Nucleophile in catalysis. N105 and N120 each carry an N-linked (GlcNAc...) asparagine glycan. R165 serves as a coordination point for 1D-myo-inositol hexakisphosphate. Residues N207 and N230 are each glycosylated (N-linked (GlcNAc...) asparagine). K301 provides a ligand contact to 1D-myo-inositol hexakisphosphate. N339 and N352 each carry an N-linked (GlcNAc...) asparagine glycan. 1D-myo-inositol hexakisphosphate is bound by residues H361 and D362. N376 and N388 each carry an N-linked (GlcNAc...) asparagine glycan.

This sequence belongs to the histidine acid phosphatase family. As to quaternary structure, monomer.

It is found in the secreted. It carries out the reaction 1D-myo-inositol hexakisphosphate + H2O = 1D-myo-inositol 1,2,4,5,6-pentakisphosphate + phosphate. The catalysed reaction is 1D-myo-inositol 1,2,4,5,6-pentakisphosphate + H2O = 1D-myo-inositol 1,2,5,6-tetrakisphosphate + phosphate. The enzyme catalyses 1D-myo-inositol 1,2,5,6-tetrakisphosphate + H2O = 1D-myo-inositol 1,2,6-trisphosphate + phosphate. It catalyses the reaction 1D-myo-inositol 1,2,6-trisphosphate + H2O = 1D-myo-inositol 1,2-bisphosphate + phosphate. It carries out the reaction 1D-myo-inositol 1,2-bisphosphate + H2O = 1D-myo-inositol 2-phosphate + phosphate. Its function is as follows. Catalyzes the phosphate monoester hydrolysis of phytic acid (myo-inositol hexakisphosphate), which results in the stepwise formation of myo-inositol pentakis-, tetrakis-, tris-, bis-, and monophosphates, as well as the liberation of inorganic phosphate. Myo-inositol 2-monophosphate is the end product. This Aspergillus awamori (Black koji mold) protein is Phytase A (phyA).